Here is a 195-residue protein sequence, read N- to C-terminus: Holliday junction branch migration complex subunit RuvA (195 aa).

Residues 1–62 (MIEFVKGPVA…EDQQTLYGFR (62 aa)) form a domain I region. Positions 63–141 (SRRERELFNK…ELAPDYVPNE (79 aa)) are domain II. The segment at 141-145 (EGLFA) is flexible linker. The interval 146–195 (QGASELDEACEALVALGYSEREIAKVRKALSGEILTTDAYIKRALQLLLK) is domain III.

Belongs to the RuvA family. As to quaternary structure, homotetramer. Forms an RuvA(8)-RuvB(12)-Holliday junction (HJ) complex. HJ DNA is sandwiched between 2 RuvA tetramers; dsDNA enters through RuvA and exits via RuvB. An RuvB hexamer assembles on each DNA strand where it exits the tetramer. Each RuvB hexamer is contacted by two RuvA subunits (via domain III) on 2 adjacent RuvB subunits; this complex drives branch migration. In the full resolvosome a probable DNA-RuvA(4)-RuvB(12)-RuvC(2) complex forms which resolves the HJ.

The protein resides in the cytoplasm. The RuvA-RuvB-RuvC complex processes Holliday junction (HJ) DNA during genetic recombination and DNA repair, while the RuvA-RuvB complex plays an important role in the rescue of blocked DNA replication forks via replication fork reversal (RFR). RuvA specifically binds to HJ cruciform DNA, conferring on it an open structure. The RuvB hexamer acts as an ATP-dependent pump, pulling dsDNA into and through the RuvAB complex. HJ branch migration allows RuvC to scan DNA until it finds its consensus sequence, where it cleaves and resolves the cruciform DNA. The sequence is that of Holliday junction branch migration complex subunit RuvA from Exiguobacterium sp. (strain ATCC BAA-1283 / AT1b).